The following is a 238-amino-acid chain: Ribosomal RNA small subunit methyltransferase G (238 aa).

S-adenosyl-L-methionine-binding positions include Gly77, Phe82, 128 to 129 (AE), and Arg147. The disordered stretch occupies residues 219-238 (KKTPARYPRKPGTPNKQPIQ).

Belongs to the methyltransferase superfamily. RNA methyltransferase RsmG family.

The protein localises to the cytoplasm. In terms of biological role, specifically methylates the N7 position of guanine in position 535 of 16S rRNA. In Geobacillus thermodenitrificans (strain NG80-2), this protein is Ribosomal RNA small subunit methyltransferase G.